An 881-amino-acid polypeptide reads, in one-letter code: Leucine--tRNA ligase (881 aa).

Positions 48–58 match the 'HIGH' region motif; it reads PYPSGKLHMGH. Residues 638-642 carry the 'KMSKS' region motif; it reads KMSKS. Residue Lys641 participates in ATP binding.

The protein belongs to the class-I aminoacyl-tRNA synthetase family.

Its subcellular location is the cytoplasm. It carries out the reaction tRNA(Leu) + L-leucine + ATP = L-leucyl-tRNA(Leu) + AMP + diphosphate. This chain is Leucine--tRNA ligase, found in Herminiimonas arsenicoxydans.